The primary structure comprises 146 residues: uncharacterized protein (146 aa).

The disordered stretch occupies residues 67-93; the sequence is DDNGMESGFCSGATSTGQSASTSPAPV. A compositionally biased stretch (low complexity) spans 77-92; it reads SGATSTGQSASTSPAP.

This is an uncharacterized protein from Caenorhabditis elegans.